Reading from the N-terminus, the 588-residue chain is Aspartate--tRNA ligase (588 aa).

Position 172 (E172) interacts with L-aspartate. Residues 196 to 199 are aspartate; it reads QLFK. R218 is a binding site for L-aspartate. ATP-binding positions include 218–220 and Q227; that span reads RDE. H449 provides a ligand contact to L-aspartate. Residue E483 coordinates ATP. R490 contacts L-aspartate. Residue 535 to 538 participates in ATP binding; it reads GLDR.

This sequence belongs to the class-II aminoacyl-tRNA synthetase family. Type 1 subfamily. As to quaternary structure, homodimer.

Its subcellular location is the cytoplasm. The catalysed reaction is tRNA(Asp) + L-aspartate + ATP = L-aspartyl-tRNA(Asp) + AMP + diphosphate. Functionally, catalyzes the attachment of L-aspartate to tRNA(Asp) in a two-step reaction: L-aspartate is first activated by ATP to form Asp-AMP and then transferred to the acceptor end of tRNA(Asp). In Haemophilus influenzae (strain PittEE), this protein is Aspartate--tRNA ligase.